The chain runs to 179 residues: ATP synthase subunit delta (179 aa).

It belongs to the ATPase delta chain family. In terms of assembly, F-type ATPases have 2 components, F(1) - the catalytic core - and F(0) - the membrane proton channel. F(1) has five subunits: alpha(3), beta(3), gamma(1), delta(1), epsilon(1). F(0) has three main subunits: a(1), b(2) and c(10-14). The alpha and beta chains form an alternating ring which encloses part of the gamma chain. F(1) is attached to F(0) by a central stalk formed by the gamma and epsilon chains, while a peripheral stalk is formed by the delta and b chains.

It localises to the cell inner membrane. Its function is as follows. F(1)F(0) ATP synthase produces ATP from ADP in the presence of a proton or sodium gradient. F-type ATPases consist of two structural domains, F(1) containing the extramembraneous catalytic core and F(0) containing the membrane proton channel, linked together by a central stalk and a peripheral stalk. During catalysis, ATP synthesis in the catalytic domain of F(1) is coupled via a rotary mechanism of the central stalk subunits to proton translocation. Functionally, this protein is part of the stalk that links CF(0) to CF(1). It either transmits conformational changes from CF(0) to CF(1) or is implicated in proton conduction. This chain is ATP synthase subunit delta, found in Polaromonas naphthalenivorans (strain CJ2).